The sequence spans 477 residues: Bifunctional protein HldE (477 aa).

The interval 1–321 (MKILKSFTPR…EYEASLHKST (321 aa)) is ribokinase. 198-201 (NKKE) contributes to the ATP binding site. The active site involves Asp-266. Residues 348–477 (FTNGCFDILH…IQKIKGDLHV (130 aa)) form a cytidylyltransferase region.

The protein in the N-terminal section; belongs to the carbohydrate kinase PfkB family. This sequence in the C-terminal section; belongs to the cytidylyltransferase family. Homodimer.

The enzyme catalyses D-glycero-beta-D-manno-heptose 7-phosphate + ATP = D-glycero-beta-D-manno-heptose 1,7-bisphosphate + ADP + H(+). It catalyses the reaction D-glycero-beta-D-manno-heptose 1-phosphate + ATP + H(+) = ADP-D-glycero-beta-D-manno-heptose + diphosphate. It participates in nucleotide-sugar biosynthesis; ADP-L-glycero-beta-D-manno-heptose biosynthesis; ADP-L-glycero-beta-D-manno-heptose from D-glycero-beta-D-manno-heptose 7-phosphate: step 1/4. It functions in the pathway nucleotide-sugar biosynthesis; ADP-L-glycero-beta-D-manno-heptose biosynthesis; ADP-L-glycero-beta-D-manno-heptose from D-glycero-beta-D-manno-heptose 7-phosphate: step 3/4. Catalyzes the phosphorylation of D-glycero-D-manno-heptose 7-phosphate at the C-1 position to selectively form D-glycero-beta-D-manno-heptose-1,7-bisphosphate. Its function is as follows. Catalyzes the ADP transfer from ATP to D-glycero-beta-D-manno-heptose 1-phosphate, yielding ADP-D-glycero-beta-D-manno-heptose. In Sulfurimonas denitrificans (strain ATCC 33889 / DSM 1251) (Thiomicrospira denitrificans (strain ATCC 33889 / DSM 1251)), this protein is Bifunctional protein HldE.